The chain runs to 86 residues: Muscarinic toxin MTX6 (86 aa).

A signal peptide spans 1–21; the sequence is MKTLLLTLVVVTILCLDLGYT. 4 disulfide bridges follow: Cys24–Cys45, Cys38–Cys63, Cys67–Cys78, and Cys79–Cys84.

The protein belongs to the three-finger toxin family. Short-chain subfamily. Aminergic toxin sub-subfamily. As to quaternary structure, monomer. In terms of tissue distribution, expressed by the venom gland.

It localises to the secreted. Its function is as follows. Binds to the muscarinic acetylcholine receptor (CHRM). The polypeptide is Muscarinic toxin MTX6 (Ophiophagus hannah (King cobra)).